Here is an 88-residue protein sequence, read N- to C-terminus: Small ribosomal subunit protein bS20 (88 aa).

The interval 1–27 (MANSKSAKKRALQSEKRRQHNASRRSM) is disordered.

Belongs to the bacterial ribosomal protein bS20 family.

Its function is as follows. Binds directly to 16S ribosomal RNA. The chain is Small ribosomal subunit protein bS20 from Shewanella denitrificans (strain OS217 / ATCC BAA-1090 / DSM 15013).